A 77-amino-acid chain; its full sequence is Putative antitoxin VapB3 (77 aa).

The protein belongs to the UPF0330 family.

Its function is as follows. Possibly the antitoxin component of a type II toxin-antitoxin (TA) system. Its cognate toxin is VapC3 (Potential). The sequence is that of Putative antitoxin VapB3 (vapB3) from Methanocaldococcus jannaschii (strain ATCC 43067 / DSM 2661 / JAL-1 / JCM 10045 / NBRC 100440) (Methanococcus jannaschii).